Consider the following 144-residue polypeptide: Large ribosomal subunit protein uL13 (144 aa).

The protein belongs to the universal ribosomal protein uL13 family. As to quaternary structure, part of the 50S ribosomal subunit.

In terms of biological role, this protein is one of the early assembly proteins of the 50S ribosomal subunit, although it is not seen to bind rRNA by itself. It is important during the early stages of 50S assembly. This is Large ribosomal subunit protein uL13 from Clostridium tetani (strain Massachusetts / E88).